A 327-amino-acid polypeptide reads, in one-letter code: tRNA dimethylallyltransferase (327 aa).

14-21 (GPTASGKT) contacts ATP. A substrate-binding site is contributed by 16–21 (TASGKT). Interaction with substrate tRNA stretches follow at residues 39 to 42 (DSAL) and 163 to 167 (QRIQR).

This sequence belongs to the IPP transferase family. Monomer. Mg(2+) serves as cofactor.

The catalysed reaction is adenosine(37) in tRNA + dimethylallyl diphosphate = N(6)-dimethylallyladenosine(37) in tRNA + diphosphate. Functionally, catalyzes the transfer of a dimethylallyl group onto the adenine at position 37 in tRNAs that read codons beginning with uridine, leading to the formation of N6-(dimethylallyl)adenosine (i(6)A). This Xanthomonas campestris pv. campestris (strain 8004) protein is tRNA dimethylallyltransferase.